Consider the following 112-residue polypeptide: T cell receptor alpha variable 7 (112 aa).

Residues 1 to 21 (MEKMRRPVLIIFCLCLGWANG) form the signal peptide. Positions 22–112 (ENQVEHSPHF…DSATYFCAVD (91 aa)) constitute an Ig-like domain. A disulfide bridge connects residues Cys-44 and Cys-109. N-linked (GlcNAc...) asparagine glycosylation is found at Asn-84 and Asn-90.

In terms of assembly, alpha-beta TR is a heterodimer composed of an alpha and beta chain; disulfide-linked. The alpha-beta TR is associated with the transmembrane signaling CD3 coreceptor proteins to form the TR-CD3 (TcR or TCR). The assembly of alpha-beta TR heterodimers with CD3 occurs in the endoplasmic reticulum where a single alpha-beta TR heterodimer associates with one CD3D-CD3E heterodimer, one CD3G-CD3E heterodimer and one CD247 homodimer forming a stable octameric structure. CD3D-CD3E and CD3G-CD3E heterodimers preferentially associate with TR alpha and TR beta chains, respectively. The association of the CD247 homodimer is the last step of TcR assembly in the endoplasmic reticulum and is required for transport to the cell surface.

It is found in the cell membrane. V region of the variable domain of T cell receptor (TR) alpha chain that participates in the antigen recognition. Alpha-beta T cell receptors are antigen specific receptors which are essential to the immune response and are present on the cell surface of T lymphocytes. Recognize peptide-major histocompatibility (MH) (pMH) complexes that are displayed by antigen presenting cells (APC), a prerequisite for efficient T cell adaptive immunity against pathogens. Binding of alpha-beta TR to pMH complex initiates TR-CD3 clustering on the cell surface and intracellular activation of LCK that phosphorylates the ITAM motifs of CD3G, CD3D, CD3E and CD247 enabling the recruitment of ZAP70. In turn ZAP70 phosphorylates LAT, which recruits numerous signaling molecules to form the LAT signalosome. The LAT signalosome propagates signal branching to three major signaling pathways, the calcium, the mitogen-activated protein kinase (MAPK) kinase and the nuclear factor NF-kappa-B (NF-kB) pathways, leading to the mobilization of transcription factors that are critical for gene expression and essential for T cell growth and differentiation. The T cell repertoire is generated in the thymus, by V-(D)-J rearrangement. This repertoire is then shaped by intrathymic selection events to generate a peripheral T cell pool of self-MH restricted, non-autoaggressive T cells. Post-thymic interaction of alpha-beta TR with the pMH complexes shapes TR structural and functional avidity. This Homo sapiens (Human) protein is T cell receptor alpha variable 7.